The following is a 159-amino-acid chain: Na(+)/H(+) antiporter subunit E1 (159 aa).

4 helical membrane-spanning segments follow: residues Met1 to Ser21, Leu27 to Gly47, Phe49 to Leu69, and Trp101 to Ile121.

Belongs to the CPA3 antiporters (TC 2.A.63) subunit E family. May form a heterooligomeric complex that consists of seven subunits: mnhA1, mnhB1, mnhC1, mnhD1, mnhE1, mnhF1 and mnhG1.

Its subcellular location is the cell membrane. Functionally, mnh complex is a Na(+)/H(+) antiporter involved in Na(+) excretion. In Staphylococcus haemolyticus (strain JCSC1435), this protein is Na(+)/H(+) antiporter subunit E1 (mnhE1).